The chain runs to 289 residues: Serine/threonine-protein phosphatase Pgam5, mitochondrial (289 aa).

The helical transmembrane segment at 7–23 (FVCGTGAGLAVYYLQRL) threads the bilayer.

This sequence belongs to the phosphoglycerate mutase family. BPG-dependent PGAM subfamily. As to quaternary structure, interacts with Pk92B/ASK1.

Its subcellular location is the mitochondrion outer membrane. The catalysed reaction is O-phospho-L-seryl-[protein] + H2O = L-seryl-[protein] + phosphate. It carries out the reaction O-phospho-L-threonyl-[protein] + H2O = L-threonyl-[protein] + phosphate. Displays phosphatase activity for serine/threonine residues, and dephosphorylates and activates Pk92B kinase. Has apparently no phosphoglycerate mutase activity. This Drosophila erecta (Fruit fly) protein is Serine/threonine-protein phosphatase Pgam5, mitochondrial.